Here is a 1230-residue protein sequence, read N- to C-terminus: SAM and SH3 domain-containing protein 1 (1230 aa).

The segment covering 1–10 (MEEDAGAASP) has biased composition (low complexity). Residues 1-30 (MEEDAGAASPAPEPEPEVDPARELEPEAGV) form a disordered region. Serine 83 and serine 241 each carry phosphoserine. Disordered stretches follow at residues 211–249 (RQSSTLDPADWPDGSYPTLDGSSTCNSREQSDDETEDSV) and 275–337 (KKPS…LDTW). Positions 275-297 (KKPSAEGGEEHVFENSPVQDERS) are enriched in basic and acidic residues. The span at 324-336 (SLTPSPSSSSLDT) shows a compositional bias: low complexity. Serine 400 carries the post-translational modification Phosphoserine. Disordered regions lie at residues 439-566 (PRIS…YDTD), 610-633 (EEKPKRPTRRRKKGRPSQPKSVED), and 705-792 (VDNQ…KSCD). A compositionally biased stretch (polar residues) spans 461 to 470 (KYSSPVSEQD). Over residues 485 to 494 (PDSEHVDKPK) the composition is skewed to basic and acidic residues. Low complexity predominate over residues 498 to 516 (GGSVESLRSSLSGQSSMSG). The segment covering 517-529 (QTVSTTDSSTSNR) has biased composition (polar residues). In terms of domain architecture, SH3 spans 547-608 (PFCGRARVHT…KFIYVDVLNE (62 aa)). The span at 615 to 624 (RPTRRRKKGR) shows a compositional bias: basic residues. The SAM 1 domain maps to 626 to 690 (SQPKSVEDLL…LTAVELLQEY (65 aa)). A compositionally biased stretch (polar residues) spans 737 to 758 (VLSTKSSTESNLKSFTRSQPGN). Residues 768 to 779 (GEVRKQGEEGRL) are compositionally biased toward basic and acidic residues. Residues serine 813 and serine 831 each carry the phosphoserine modification. 2 disordered regions span residues 818–875 (EGPE…LPRG) and 915–1045 (PPQC…PWLA). Residues 844-852 (NVPTEMPET) form a required for interaction with TRAF6 region. A compositionally biased stretch (polar residues) spans 852–868 (TCSQNVPEVPQKTSACT). Positions 940–956 (GLRKGHDHHPLGTKEGV) are enriched in basic and acidic residues. A compositionally biased stretch (polar residues) spans 962–972 (APETRTQSRHP). Low complexity predominate over residues 1008 to 1019 (SPASPVSPSDCP). The SAM 2 domain occupies 1160–1224 (GCVASMSDWL…ITAARLFKLP (65 aa)).

As to quaternary structure, interacts with GNAS. Interacts with IQGAP1. Interacts with TRAF6 (via C-terminus); the interaction is LPS-dependent. Interacts with MAP3K7, CHUK and IKBKB. As to expression, expressed in the microvascular endothelium of various organs, as well as in parenchymal cells. Expressed in the endothelium but not lymphoid cells of spleen and thymus.

The protein resides in the cytoplasm. In terms of biological role, is a positive regulator of NF-kappa-B signaling downstream of TLR4 activation. It acts as a scaffold molecule to assemble a molecular complex that includes TRAF6, MAP3K7, CHUK and IKBKB, thereby facilitating NF-kappa-B signaling activation. Regulates TRAF6 and MAP3K7 ubiquitination. Involved in the regulation of cell mobility. Regulates lipolysaccharide (LPS)-induced endothelial cell migration. Is involved in the regulation of skin pigmentation through the control of melanocyte migration in the epidermis. The polypeptide is SAM and SH3 domain-containing protein 1 (Sash1) (Mus musculus (Mouse)).